A 138-amino-acid polypeptide reads, in one-letter code: Ribosome-binding factor A (138 aa).

Positions 117–138 (ERQNKPAASTEKPPVGSLDADL) are disordered.

The protein belongs to the RbfA family. As to quaternary structure, monomer. Binds 30S ribosomal subunits, but not 50S ribosomal subunits or 70S ribosomes.

The protein localises to the cytoplasm. Its function is as follows. One of several proteins that assist in the late maturation steps of the functional core of the 30S ribosomal subunit. Associates with free 30S ribosomal subunits (but not with 30S subunits that are part of 70S ribosomes or polysomes). Required for efficient processing of 16S rRNA. May interact with the 5'-terminal helix region of 16S rRNA. The protein is Ribosome-binding factor A of Acaryochloris marina (strain MBIC 11017).